We begin with the raw amino-acid sequence, 246 residues long: UDP-N-acetyl-D-mannosaminuronic acid transferase (246 aa).

Belongs to the glycosyltransferase 26 family.

It catalyses the reaction UDP-N-acetyl-alpha-D-mannosaminouronate + N-acetyl-alpha-D-glucosaminyl-di-trans,octa-cis-undecaprenyl diphosphate = beta-D-ManNAcA-(1-&gt;4)-alpha-D-GlcNAc-di-trans,octa-cis-undecaprenyl diphosphate + UDP + H(+). It functions in the pathway bacterial outer membrane biogenesis; enterobacterial common antigen biosynthesis. In terms of biological role, catalyzes the synthesis of Und-PP-GlcNAc-ManNAcA (Lipid II), the second lipid-linked intermediate involved in enterobacterial common antigen (ECA) synthesis. This is UDP-N-acetyl-D-mannosaminuronic acid transferase from Escherichia coli (strain ATCC 8739 / DSM 1576 / NBRC 3972 / NCIMB 8545 / WDCM 00012 / Crooks).